The chain runs to 212 residues: Small ribosomal subunit protein eS6 (212 aa).

The protein belongs to the eukaryotic ribosomal protein eS6 family.

The protein is Small ribosomal subunit protein eS6 of Metallosphaera sedula (strain ATCC 51363 / DSM 5348 / JCM 9185 / NBRC 15509 / TH2).